Consider the following 553-residue polypeptide: Cytokine-like nuclear factor N-PAC (553 aa).

One can recognise a PWWP domain in the interval 8–66 (LGDLVWGKLGRYPPWPGKIVNPPKDLKKPRGKKCFFVKFFGTEDHAWIKVEQLKPYHLH). 2 stretches are compositionally biased toward basic and acidic residues: residues 92-145 (KTKG…EGKK) and 162-182 (RAQD…KDLT). Residues 92 to 188 (KTKGKDQASS…KDLTIPESST (97 aa)) form a disordered region. The segment at residues 168–180 (PRKRGRPPKDEKD) is a DNA-binding region (a.T hook). Residues 214–217 (DPHF) are interaction with histone H3. Residues 261 to 553 (GSITPTDKKI…MSAVYRAYIH (293 aa)) form a dehydrogenase domain region. NAD(+) is bound by residues 271-285 (GFLG…IVSN), Thr362, and Lys505.

This sequence belongs to the HIBADH-related family. NP60 subfamily. In terms of assembly, homotetramere. Binds to mononucleosomes.

The protein resides in the nucleus. Its subcellular location is the chromosome. In terms of biological role, cytokine-like nuclear factor with chromatin gene reader activity involved in chromatin modification and regulation of gene expression. Acts as a nucleosome-destabilizing factor that is recruited to genes during transcriptional activation. Recognizes and binds histone H3 without a preference for specific epigenetic markers and also binds DNA. Interacts with KDM1B and promotes its histone demethylase activity by facilitating the capture of H3 tails, they form a multifunctional enzyme complex that modifies transcribed chromatin and facilitates Pol II transcription through nucleosomes. The chain is Cytokine-like nuclear factor N-PAC (GLYR1) from Gallus gallus (Chicken).